Consider the following 1346-residue polypeptide: Cytokinesis protein sepH (1346 aa).

The interval 1 to 50 (MVSRSNEGPEAPHPASRTPGAPAKGRLTRLGSSPSKRDDKAKDDRMGKTS) is disordered. Residues 35–50 (SKRDDKAKDDRMGKTS) show a composition bias toward basic and acidic residues. Residues 60 to 310 (YQLGDCLGRG…ARKLLKHPWI (251 aa)) form the Protein kinase domain. ATP is bound by residues 66 to 74 (LGRGAFGSV) and Lys89. The active-site Proton acceptor is the Asp182. Disordered regions lie at residues 342-380 (RSPE…PSPV), 446-497 (DESF…HMRR), and 1211-1295 (LCKL…AGAS). Polar residues-rich tracts occupy residues 477-489 (QQAN…SQNG) and 1220-1249 (RGST…NQSK).

Belongs to the protein kinase superfamily. Ser/Thr protein kinase family. CDC7 subfamily. Requires Mg(2+) as cofactor.

The catalysed reaction is L-seryl-[protein] + ATP = O-phospho-L-seryl-[protein] + ADP + H(+). It carries out the reaction L-threonyl-[protein] + ATP = O-phospho-L-threonyl-[protein] + ADP + H(+). Functionally, required for early events during cytokinesis including localization of cytoskeletal components to the cytokinetic ring. In Emericella nidulans (strain FGSC A4 / ATCC 38163 / CBS 112.46 / NRRL 194 / M139) (Aspergillus nidulans), this protein is Cytokinesis protein sepH.